The primary structure comprises 536 residues: Protein GvpD1 (536 aa).

39–46 (GAPGTGKT) contributes to the ATP binding site. The tract at residues 352-413 (GPSDSADRYD…SDQPHPIDED (62 aa)) is disordered. The span at 363–372 (PDSTESFSEM) shows a compositional bias: polar residues. Positions 373–385 (ATTTPPDDAPTAT) are enriched in low complexity. Positions 386–396 (HETDGADDGSR) are enriched in basic and acidic residues.

This sequence belongs to the gas vesicle GvpD family. As to quaternary structure, interacts with GvpE.

It is found in the cytoplasm. Causes a decrease in the amount of GvpE protein. The 5'-region of its promoter or mRNA has a repressive function on downstream genes. Gas vesicles are hollow, gas filled proteinaceous nanostructures found in several microbial planktonic microorganisms. They allow positioning of halobacteria at the optimal depth for growth in the poorly aerated, shallow brine pools of their habitat. Functionally, expression of a 9.5 kb p-vac DNA fragment containing 2 divergently transcribed regions (gvpD-gvpE-gvpF-gvpG-gvpH-gvpI-gvpJ-gvpK-gvpL-gvpM and gvpA-gvpC-gvpN-gvpO) allows H.volcanii to produce gas vesicles. A similar region restores gas vesicle production in H.halobium without the p-vac locus, but it still has the c-vac locus. This chain is Protein GvpD1 (gvpD11), found in Halobacterium salinarum (strain ATCC 700922 / JCM 11081 / NRC-1) (Halobacterium halobium).